A 218-amino-acid polypeptide reads, in one-letter code: Probable nicotinate-nucleotide adenylyltransferase (218 aa).

This sequence belongs to the NadD family.

The catalysed reaction is nicotinate beta-D-ribonucleotide + ATP + H(+) = deamido-NAD(+) + diphosphate. Its pathway is cofactor biosynthesis; NAD(+) biosynthesis; deamido-NAD(+) from nicotinate D-ribonucleotide: step 1/1. Functionally, catalyzes the reversible adenylation of nicotinate mononucleotide (NaMN) to nicotinic acid adenine dinucleotide (NaAD). This is Probable nicotinate-nucleotide adenylyltransferase from Corynebacterium glutamicum (strain ATCC 13032 / DSM 20300 / JCM 1318 / BCRC 11384 / CCUG 27702 / LMG 3730 / NBRC 12168 / NCIMB 10025 / NRRL B-2784 / 534).